A 253-amino-acid polypeptide reads, in one-letter code: Adenylate kinase (253 aa).

15 to 20 (GSGKGT) contacts ATP. The interval 35-64 (SSGDLLRNAVSQNTPLGQEIKSYLDQGKLL) is NMP. Residues Ser-36, Arg-41, 62-64 (KLL), 103-106 (GFPR), and Gln-110 contribute to the AMP site. Positions 143-176 (SRYICPSCQGIYNKQQGFSRCPKCLVELTRRSDD) are LID. Residue Arg-144 coordinates ATP. The Zn(2+) site is built by Cys-147 and Cys-150. Position 153–154 (153–154 (IY)) interacts with ATP. The Zn(2+) site is built by Cys-163 and Cys-166. AMP is bound by residues Arg-173 and Arg-184. Ala-212 contacts ATP.

The protein belongs to the adenylate kinase family. As to quaternary structure, monomer.

It is found in the cytoplasm. It carries out the reaction AMP + ATP = 2 ADP. It participates in purine metabolism; AMP biosynthesis via salvage pathway; AMP from ADP: step 1/1. Its function is as follows. Catalyzes the reversible transfer of the terminal phosphate group between ATP and AMP. Plays an important role in cellular energy homeostasis and in adenine nucleotide metabolism. This is Adenylate kinase from Chlamydia muridarum (strain MoPn / Nigg).